A 275-amino-acid chain; its full sequence is 5'-nucleotidase SurE (275 aa).

The a divalent metal cation site is built by Asp14, Asp15, Ser46, and Asn104.

The protein belongs to the SurE nucleotidase family. It depends on a divalent metal cation as a cofactor.

The protein resides in the cytoplasm. The enzyme catalyses a ribonucleoside 5'-phosphate + H2O = a ribonucleoside + phosphate. Functionally, nucleotidase that shows phosphatase activity on nucleoside 5'-monophosphates. The polypeptide is 5'-nucleotidase SurE (Synechocystis sp. (strain ATCC 27184 / PCC 6803 / Kazusa)).